A 648-amino-acid chain; its full sequence is Transketolase (648 aa).

A substrate-binding site is contributed by His-22. Residues His-62 and 109–111 (GPL) each bind thiamine diphosphate. Mg(2+) is bound at residue Asp-150. Thiamine diphosphate is bound by residues Gly-151 and Asn-180. Residues Asn-180 and Val-182 each coordinate Mg(2+). The substrate site is built by His-252, Arg-345, and Ser-372. Residue His-252 participates in thiamine diphosphate binding. Glu-397 acts as the Proton donor in catalysis. Phe-423 contacts thiamine diphosphate. 3 residues coordinate substrate: His-447, Asp-455, and Arg-506.

Belongs to the transketolase family. In terms of assembly, homodimer. Mg(2+) is required as a cofactor. The cofactor is Ca(2+). It depends on Mn(2+) as a cofactor. Requires Co(2+) as cofactor. Thiamine diphosphate serves as cofactor.

The enzyme catalyses D-sedoheptulose 7-phosphate + D-glyceraldehyde 3-phosphate = aldehydo-D-ribose 5-phosphate + D-xylulose 5-phosphate. Catalyzes the transfer of a two-carbon ketol group from a ketose donor to an aldose acceptor, via a covalent intermediate with the cofactor thiamine pyrophosphate. This chain is Transketolase (tkt), found in Mycoplasma pneumoniae (strain ATCC 29342 / M129 / Subtype 1) (Mycoplasmoides pneumoniae).